A 160-amino-acid polypeptide reads, in one-letter code: MKPRPPTMRIKKRYVLAAIVPNYPSIDSKVLYVAIAEAITGLYGDGAGAALHHAVVFAGDGYLIARCSRGSEQFLATALAVVTEVDGQRVAFRTLATSGTIHALRRRMRQPVERPEREDLEVDGVIYEVHVRESQKVDLIEKGCNSQKLLFLVEQDLQER.

The protein belongs to the eukaryotic/archaeal RNase P protein component 2 family. Consists of a catalytic RNA component and at least 4-5 protein subunits.

Its subcellular location is the cytoplasm. It carries out the reaction Endonucleolytic cleavage of RNA, removing 5'-extranucleotides from tRNA precursor.. In terms of biological role, part of ribonuclease P, a protein complex that generates mature tRNA molecules by cleaving their 5'-ends. This chain is Ribonuclease P protein component 2, found in Methanosphaerula palustris (strain ATCC BAA-1556 / DSM 19958 / E1-9c).